A 484-amino-acid polypeptide reads, in one-letter code: Glutamate--tRNA ligase (484 aa).

The short motif at 11–21 (PSPTGYLHIGN) is the 'HIGH' region element. A 'KMSKS' region motif is present at residues 252–256 (KLSKR). Lys-255 is an ATP binding site.

It belongs to the class-I aminoacyl-tRNA synthetase family. Glutamate--tRNA ligase type 1 subfamily. In terms of assembly, monomer.

The protein localises to the cytoplasm. It carries out the reaction tRNA(Glu) + L-glutamate + ATP = L-glutamyl-tRNA(Glu) + AMP + diphosphate. Its function is as follows. Catalyzes the attachment of glutamate to tRNA(Glu) in a two-step reaction: glutamate is first activated by ATP to form Glu-AMP and then transferred to the acceptor end of tRNA(Glu). This chain is Glutamate--tRNA ligase, found in Staphylococcus haemolyticus (strain JCSC1435).